Reading from the N-terminus, the 67-residue chain is Large ribosomal subunit protein bL32 (67 aa).

The segment covering 1–19 has biased composition (basic residues); the sequence is MAVPKRKMSRSNTRSRRSQ. Residues 1-22 are disordered; that stretch reads MAVPKRKMSRSNTRSRRSQWKA.

Belongs to the bacterial ribosomal protein bL32 family.

The polypeptide is Large ribosomal subunit protein bL32 (Kineococcus radiotolerans (strain ATCC BAA-149 / DSM 14245 / SRS30216)).